The sequence spans 490 residues: Glutathione hydrolase 6 (490 aa).

At 1–52 (MEPEAGPVLYQKLRVWEPSLESEEEEEEISEQLILDASGPHDSSGNKAGRLP) the chain is on the cytoplasmic side. A helical; Signal-anchor for type II membrane protein membrane pass occupies residues 53 to 73 (GAWAQLVAALLLLAIGFSLAV). The Extracellular segment spans residues 74 to 490 (RQLCSSGASP…PSGCCPFQGF (417 aa)). Asparagine 160, asparagine 165, and asparagine 374 each carry an N-linked (GlcNAc...) asparagine glycan.

The protein belongs to the gamma-glutamyltransferase family. Heterodimer composed of the light and heavy chains. The active site is located in the light chain. Post-translationally, cleaved by autocatalysis into a large and a small subunit and the autocatalytic cleavage is essential to the functional activation of the enzyme.

It is found in the membrane. The enzyme catalyses an N-terminal (5-L-glutamyl)-[peptide] + an alpha-amino acid = 5-L-glutamyl amino acid + an N-terminal L-alpha-aminoacyl-[peptide]. It catalyses the reaction glutathione + H2O = L-cysteinylglycine + L-glutamate. It carries out the reaction an S-substituted glutathione + H2O = an S-substituted L-cysteinylglycine + L-glutamate. It functions in the pathway sulfur metabolism; glutathione metabolism. Hydrolyzes and transfers gamma-glutamyl moieties from glutathione and other gamma-glutamyl compounds to acceptors. The protein is Glutathione hydrolase 6 of Bos taurus (Bovine).